The primary structure comprises 95 residues: Aspartyl/glutamyl-tRNA(Asn/Gln) amidotransferase subunit C (95 aa).

Belongs to the GatC family. As to quaternary structure, heterotrimer of A, B and C subunits.

It carries out the reaction L-glutamyl-tRNA(Gln) + L-glutamine + ATP + H2O = L-glutaminyl-tRNA(Gln) + L-glutamate + ADP + phosphate + H(+). The enzyme catalyses L-aspartyl-tRNA(Asn) + L-glutamine + ATP + H2O = L-asparaginyl-tRNA(Asn) + L-glutamate + ADP + phosphate + 2 H(+). Its function is as follows. Allows the formation of correctly charged Asn-tRNA(Asn) or Gln-tRNA(Gln) through the transamidation of misacylated Asp-tRNA(Asn) or Glu-tRNA(Gln) in organisms which lack either or both of asparaginyl-tRNA or glutaminyl-tRNA synthetases. The reaction takes place in the presence of glutamine and ATP through an activated phospho-Asp-tRNA(Asn) or phospho-Glu-tRNA(Gln). In Syntrophus aciditrophicus (strain SB), this protein is Aspartyl/glutamyl-tRNA(Asn/Gln) amidotransferase subunit C.